The chain runs to 339 residues: 3-isopropylmalate dehydrogenase (339 aa).

4 residues coordinate substrate: R88, R98, R122, and D212. Mg(2+) is bound by residues D212, D236, and D240. G272–D284 provides a ligand contact to NAD(+).

Belongs to the isocitrate and isopropylmalate dehydrogenases family. LeuB type 2 subfamily. Homodimer. It depends on Mg(2+) as a cofactor. Requires Mn(2+) as cofactor.

Its subcellular location is the cytoplasm. The enzyme catalyses (2R,3S)-3-isopropylmalate + NAD(+) = 4-methyl-2-oxopentanoate + CO2 + NADH. It functions in the pathway amino-acid biosynthesis; L-leucine biosynthesis; L-leucine from 3-methyl-2-oxobutanoate: step 3/4. Catalyzes the oxidation of 3-carboxy-2-hydroxy-4-methylpentanoate (3-isopropylmalate) to 3-carboxy-4-methyl-2-oxopentanoate. The product decarboxylates to 4-methyl-2 oxopentanoate. This chain is 3-isopropylmalate dehydrogenase, found in Corynebacterium urealyticum (strain ATCC 43042 / DSM 7109).